The sequence spans 156 residues: Small ribosomal subunit protein uS7 (156 aa).

The protein belongs to the universal ribosomal protein uS7 family. In terms of assembly, part of the 30S ribosomal subunit. Contacts proteins S9 and S11.

Its function is as follows. One of the primary rRNA binding proteins, it binds directly to 16S rRNA where it nucleates assembly of the head domain of the 30S subunit. Is located at the subunit interface close to the decoding center, probably blocks exit of the E-site tRNA. This chain is Small ribosomal subunit protein uS7, found in Thermomicrobium roseum (strain ATCC 27502 / DSM 5159 / P-2).